The sequence spans 275 residues: Large ribosomal subunit protein uL2 (275 aa).

2 disordered regions span residues 36 to 55 (PKKR…RHKG) and 223 to 275 (VVMN…RHAR).

Belongs to the universal ribosomal protein uL2 family. In terms of assembly, part of the 50S ribosomal subunit. Forms a bridge to the 30S subunit in the 70S ribosome.

In terms of biological role, one of the primary rRNA binding proteins. Required for association of the 30S and 50S subunits to form the 70S ribosome, for tRNA binding and peptide bond formation. It has been suggested to have peptidyltransferase activity; this is somewhat controversial. Makes several contacts with the 16S rRNA in the 70S ribosome. The polypeptide is Large ribosomal subunit protein uL2 (Thiobacillus denitrificans (strain ATCC 25259 / T1)).